We begin with the raw amino-acid sequence, 290 residues long: MKLAVYGKGGIGKSTTSCNISVALSKRGKKVLQIGCDPKHDSTFTLTGFLIPTIIDTLQSKDYHYEDVWPEDVIYKGYGGVDCVEAGGPPAGAGCGGYVVGETVKLLKELNAFDEYDIILFDVLGDVVCGGFAAPLNYADYCLIITDNGFDALFAANRIAASVREKARTHSLRLAGLVGNRTDKRDLIDKYIDCVPMPVLEVLPLIEDIRVSRVKGKTLFEMAEIDKDLAYVCDYYLNIADQLITRPEGVVPKESPDRELFSLLSDFYLNPKSKVGQEKVDQEELDLMIV.

ATP-binding positions include 10–15 and K39; that span reads GIGKST. S14 is a Mg(2+) binding site. The [4Fe-4S] cluster site is built by C95 and C129. 180 to 181 provides a ligand contact to ATP; it reads NR.

Belongs to the NifH/BchL/ChlL family. In terms of assembly, homodimer. Protochlorophyllide reductase is composed of three subunits; ChlL, ChlN and ChlB. The cofactor is [4Fe-4S] cluster.

It is found in the plastid. The protein localises to the chloroplast. It catalyses the reaction chlorophyllide a + oxidized 2[4Fe-4S]-[ferredoxin] + 2 ADP + 2 phosphate = protochlorophyllide a + reduced 2[4Fe-4S]-[ferredoxin] + 2 ATP + 2 H2O. Its pathway is porphyrin-containing compound metabolism; chlorophyll biosynthesis (light-independent). Functionally, component of the dark-operative protochlorophyllide reductase (DPOR) that uses Mg-ATP and reduced ferredoxin to reduce ring D of protochlorophyllide (Pchlide) to form chlorophyllide a (Chlide). This reaction is light-independent. The L component serves as a unique electron donor to the NB-component of the complex, and binds Mg-ATP. The protein is Light-independent protochlorophyllide reductase iron-sulfur ATP-binding protein of Pyropia yezoensis (Susabi-nori).